Consider the following 536-residue polypeptide: Probable protein S-acyltransferase 23 (536 aa).

The segment at 1–23 (MDSSEIEVVPLDSNSHQSPTESP) is disordered. A compositionally biased stretch (polar residues) spans 12–23 (DSNSHQSPTESP). 6 ANK repeats span residues 57-86 (NGFY…DVNS), 90-119 (IQQT…RIEA), 123-153 (NGFR…DYNA), 157-186 (EGRS…CQNR), 190-219 (TGCT…KEEL), and 225-254 (TGST…TRKN). A run of 2 helical transmembrane segments spans residues 270-290 (YAPM…TSIV) and 298-318 (ITAM…YALI). Residues 363-413 (QLCPTCKIIRPVRSKHCPTCKRCVEQFDHHCPWISNCVGKKNKRYFLVFVI) form the DHHC domain. The S-palmitoyl cysteine intermediate role is filled by cysteine 393. Helical transmembrane passes span 407 to 427 (YFLV…TTAV) and 454 to 474 (AAVF…LTIS).

Belongs to the DHHC palmitoyltransferase family. In terms of tissue distribution, expressed in roots, shoots, flowers and pollen.

It localises to the golgi apparatus membrane. It catalyses the reaction L-cysteinyl-[protein] + hexadecanoyl-CoA = S-hexadecanoyl-L-cysteinyl-[protein] + CoA. Functionally, palmitoyl acyltransferase. This chain is Probable protein S-acyltransferase 23 (PAT23), found in Arabidopsis thaliana (Mouse-ear cress).